Reading from the N-terminus, the 430-residue chain is MHDIRAIRENPAAFDAALARRGEAPMSQAILALDTARRAKINAAENAQAEQNKASKEVGQAKAQGDEATFEKLRALVSEKKALVAEMQADAKALDAELTEKLSWIANIPADDVPDGADEDDNVEVRRWGHLPDFEFTPKEHYEIGGVAASMDFDTAAKTSGARFVMLKGAVARIHRALSQFMIDTHVDHNGLTEINSPVLVRDDAMYGTDKLPKFAEDSYQTTNGWWLVSTSEIPLTYTVAGDILDAAALPIRLTAHTLCFRSEAGSAGRDTAGMLRQHQFEKVEMVSITEPDQSEAEQQRMLRCAEDILERLGLPYRTVLLCTGDMGFGARRTFDIEAWLPGQNNYREISSVSTTGDFQARRMNARYKPADGGKPQFVHTLNGSGLAVGRCLIAVLENGQQADGSVVLPPVLAGYLGGKTVLSAEGTLV.

Thr-231 to Glu-233 contacts L-serine. Position 262–264 (Arg-262–Glu-264) interacts with ATP. Residue Glu-285 participates in L-serine binding. Glu-349–Ser-352 contributes to the ATP binding site. Ser-385 provides a ligand contact to L-serine.

Belongs to the class-II aminoacyl-tRNA synthetase family. Type-1 seryl-tRNA synthetase subfamily. Homodimer. The tRNA molecule binds across the dimer.

Its subcellular location is the cytoplasm. The catalysed reaction is tRNA(Ser) + L-serine + ATP = L-seryl-tRNA(Ser) + AMP + diphosphate + H(+). It catalyses the reaction tRNA(Sec) + L-serine + ATP = L-seryl-tRNA(Sec) + AMP + diphosphate + H(+). The protein operates within aminoacyl-tRNA biosynthesis; selenocysteinyl-tRNA(Sec) biosynthesis; L-seryl-tRNA(Sec) from L-serine and tRNA(Sec): step 1/1. Its function is as follows. Catalyzes the attachment of serine to tRNA(Ser). Is also able to aminoacylate tRNA(Sec) with serine, to form the misacylated tRNA L-seryl-tRNA(Sec), which will be further converted into selenocysteinyl-tRNA(Sec). The protein is Serine--tRNA ligase of Roseobacter denitrificans (strain ATCC 33942 / OCh 114) (Erythrobacter sp. (strain OCh 114)).